The primary structure comprises 384 residues: Chaperone protein DnaJ 1 (384 aa).

The region spanning 4 to 68 (DYYGLLGVAR…EKRRIVDMGG (65 aa)) is the J domain. The CR-type zinc finger occupies 133–215 (GVTKHLTVDT…CGGDGRVRAR (83 aa)). Residues Cys-146, Cys-149, Cys-163, Cys-166, Cys-189, Cys-192, Cys-203, and Cys-206 each coordinate Zn(2+). 4 CXXCXGXG motif repeats span residues 146–153 (CDACHGSG), 163–170 (CETCGGAG), 189–196 (CPTCRGAG), and 203–210 (CHKCGGDG).

The protein belongs to the DnaJ family. As to quaternary structure, homodimer. Zn(2+) serves as cofactor.

Its subcellular location is the cytoplasm. In terms of biological role, participates actively in the response to hyperosmotic and heat shock by preventing the aggregation of stress-denatured proteins and by disaggregating proteins, also in an autonomous, DnaK-independent fashion. Unfolded proteins bind initially to DnaJ; upon interaction with the DnaJ-bound protein, DnaK hydrolyzes its bound ATP, resulting in the formation of a stable complex. GrpE releases ADP from DnaK; ATP binding to DnaK triggers the release of the substrate protein, thus completing the reaction cycle. Several rounds of ATP-dependent interactions between DnaJ, DnaK and GrpE are required for fully efficient folding. Also involved, together with DnaK and GrpE, in the DNA replication of plasmids through activation of initiation proteins. This chain is Chaperone protein DnaJ 1, found in Nocardia farcinica (strain IFM 10152).